The sequence spans 388 residues: Dipeptidase verJ (388 aa).

H29, D31, and E142 together coordinate Zn(2+). 3 residues coordinate substrate: H169, R243, and D300.

Belongs to the metallo-dependent hydrolases superfamily. Peptidase M19 family. Zn(2+) is required as a cofactor.

It catalyses the reaction an L-aminoacyl-L-amino acid + H2O = 2 an L-alpha-amino acid. Its pathway is mycotoxin biosynthesis. In terms of biological role, dipeptidase; part of the gene cluster that mediates the biosynthesis of 11'-deoxyverticillin A, one of the dimeric epipolythiodioxopiperazines (ETPs) from the verticillin family that act as mycotoxins. 11'-deoxyverticillin A is required for normal conidiation. The nonribosomal peptide synthetase verP is speculated to be responsible for condensation of amino acids to form the carbon skeleton of verticillin, whereas the cluster-specific tailoring enzymes are involved in further modifications leading to the production of 11'-deoxyverticillin A. The protein is Dipeptidase verJ of Clonostachys rogersoniana.